Here is a 93-residue protein sequence, read N- to C-terminus: UPF0473 protein CHY_0543 (93 aa).

Belongs to the UPF0473 family.

This is UPF0473 protein CHY_0543 from Carboxydothermus hydrogenoformans (strain ATCC BAA-161 / DSM 6008 / Z-2901).